The sequence spans 138 residues: Translation initiation factor 2 subunit beta (138 aa).

This sequence belongs to the eIF-2-beta/eIF-5 family. As to quaternary structure, heterotrimer composed of an alpha, a beta and a gamma chain.

In terms of biological role, eIF-2 functions in the early steps of protein synthesis by forming a ternary complex with GTP and initiator tRNA. The sequence is that of Translation initiation factor 2 subunit beta from Methanococcus maripaludis (strain C5 / ATCC BAA-1333).